The chain runs to 122 residues: Small ribosomal subunit protein uS13 (122 aa).

Residues 97–122 form a disordered region; it reads PVRGQRTHTNAKTRKGRSRLPIAGKK.

Belongs to the universal ribosomal protein uS13 family. As to quaternary structure, part of the 30S ribosomal subunit. Forms a loose heterodimer with protein S19. Forms two bridges to the 50S subunit in the 70S ribosome.

Its function is as follows. Located at the top of the head of the 30S subunit, it contacts several helices of the 16S rRNA. In the 70S ribosome it contacts the 23S rRNA (bridge B1a) and protein L5 of the 50S subunit (bridge B1b), connecting the 2 subunits; these bridges are implicated in subunit movement. Contacts the tRNAs in the A and P-sites. This chain is Small ribosomal subunit protein uS13, found in Wolbachia pipientis wMel.